A 121-amino-acid chain; its full sequence is Large ribosomal subunit protein uL18 (121 aa).

The interval 1–25 (MKIVISKPDKNKIRQKRHRRVRGKL) is disordered. Residues 13 to 23 (IRQKRHRRVRG) are compositionally biased toward basic residues.

It belongs to the universal ribosomal protein uL18 family. As to quaternary structure, part of the 50S ribosomal subunit; part of the 5S rRNA/L5/L18/L25 subcomplex. Contacts the 5S and 23S rRNAs.

Its function is as follows. This is one of the proteins that bind and probably mediate the attachment of the 5S RNA into the large ribosomal subunit, where it forms part of the central protuberance. The sequence is that of Large ribosomal subunit protein uL18 from Streptococcus pyogenes serotype M28 (strain MGAS6180).